The chain runs to 338 residues: Anthranilate phosphoribosyltransferase (338 aa).

5-phospho-alpha-D-ribose 1-diphosphate is bound by residues glycine 81, 84-85, threonine 89, 91-94, 109-117, and alanine 121; these read GD, NIST, and KHGNRNLSS. Anthranilate is bound at residue glycine 81. A Mg(2+)-binding site is contributed by serine 93. Residue asparagine 112 coordinates anthranilate. Arginine 167 is an anthranilate binding site. Positions 226 and 227 each coordinate Mg(2+).

It belongs to the anthranilate phosphoribosyltransferase family. As to quaternary structure, homodimer. It depends on Mg(2+) as a cofactor.

The catalysed reaction is N-(5-phospho-beta-D-ribosyl)anthranilate + diphosphate = 5-phospho-alpha-D-ribose 1-diphosphate + anthranilate. It functions in the pathway amino-acid biosynthesis; L-tryptophan biosynthesis; L-tryptophan from chorismate: step 2/5. Functionally, catalyzes the transfer of the phosphoribosyl group of 5-phosphorylribose-1-pyrophosphate (PRPP) to anthranilate to yield N-(5'-phosphoribosyl)-anthranilate (PRA). The polypeptide is Anthranilate phosphoribosyltransferase (Cereibacter sphaeroides (strain ATCC 17023 / DSM 158 / JCM 6121 / CCUG 31486 / LMG 2827 / NBRC 12203 / NCIMB 8253 / ATH 2.4.1.) (Rhodobacter sphaeroides)).